A 441-amino-acid chain; its full sequence is Xylose isomerase (441 aa).

Catalysis depends on residues His-105 and Asp-108. 7 residues coordinate Mg(2+): Glu-236, Glu-272, His-275, Asp-300, Asp-311, Asp-313, and Asp-343.

Belongs to the xylose isomerase family. As to quaternary structure, homotetramer. It depends on Mg(2+) as a cofactor.

It localises to the cytoplasm. The catalysed reaction is alpha-D-xylose = alpha-D-xylulofuranose. In Mesorhizobium japonicum (strain LMG 29417 / CECT 9101 / MAFF 303099) (Mesorhizobium loti (strain MAFF 303099)), this protein is Xylose isomerase.